The primary structure comprises 833 residues: Toll-like receptor 4 (833 aa).

Positions 1–23 are cleaved as a signal peptide; sequence MMPPTRLAGTLIPAMAFLSCLRP. The LRRNT domain occupies 24–54; the sequence is ESWDPCVEVVPNITYQCMDLNLHKIPDNIPS. Residues 24-632 lie on the Extracellular side of the membrane; that stretch reads ESWDPCVEVV…FRNATCQVRK (609 aa). Cysteines 29 and 40 form a disulfide. The N-linked (GlcNAc...) asparagine glycan is linked to Asn35. 5 LRR repeats span residues 55–76, 79–100, 103–124, 127–148, and 151–172; these read STKDLDMSFNPLRNLGSHSFSN, ELQVLDLSRCEIQIIEDDAYQG, HLSILILTGNPIQRLFPGAFSG, SLQTLVAVETNIASLEDFPIGH, and TLKELNVAHNLIHSFKLPEYFS. Asn173 is a glycosylation site (N-linked (GlcNAc...) asparagine). LRR repeat units lie at residues 176 to 197, 205 to 225, and 227 to 236; these read NLEYLDLSNNKIQNIYHKDLQV, NLSLDLSLNPLDFIQPGAFKE, and KLRELTLRSN. The N-linked (GlcNAc...) asparagine glycan is linked to Asn205. An N-linked (GlcNAc...) asparagine glycan is attached at Asn238. Cys281 and Cys306 are disulfide-bonded. A glycan (N-linked (GlcNAc...) asparagine) is linked at Asn309. LRR repeat units lie at residues 352–373, 374–394, 400–420, 423–444, 448–456, 472–495, 497–518, 521–542, and 545–565; these read PLKELVFSANEVRNAFTQVKLE, SLEFLDLSRNDFSLKSCCSER, RLKHLDLSFNNIITISSNFLG, QLEYLDFQHSSLKQVSDFSVFL, NLRYLDISY, SLQILKMAGNSFQDNFLPNIFMEL, NLTILDLSDCQLEQVSQVAFNS, KLQLLNMSHNHLLSLDTLPYEP, and SLQTLDCSFNRIVASKEQELR. Cys390 and Cys391 are oxidised to a cystine. N-linked (GlcNAc...) asparagine glycans are attached at residues Asn497 and Asn526. N-linked (GlcNAc...) asparagine glycans are attached at residues Asn570 and Asn575. The region spanning 579–630 is the LRRCT domain; sequence NDFACVCEHQSFLQWVKDQRQLLVEVEQMVCAKPLDMQGMPMLNFRNATCQV. 2 cysteine pairs are disulfide-bonded: Cys583/Cys609 and Cys585/Cys628. Residue Asn625 is glycosylated (N-linked (GlcNAc...) asparagine). Residues 633 to 653 form a helical membrane-spanning segment; the sequence is TIITGSVFTVLLVFLVVVLVY. The Cytoplasmic portion of the chain corresponds to 654–833; it reads KFYFHLMLLA…PEGMADAEGS (180 aa). A TIR domain is found at 673 to 816; sequence STYDAFVIYS…IFWRRLRKAL (144 aa).

This sequence belongs to the Toll-like receptor family. Belongs to the lipopolysaccharide (LPS) receptor, a multi-protein complex containing at least CD14, LY96 and TLR4. Binding to bacterial LPS leads to homodimerization. Interacts with LY96 via the extracellular domain. Interacts with MYD88 and TIRAP via their respective TIR domains. Interacts with TICAM2. Interacts with NOX4. Interacts with CNPY3 and HSP90B1; this interaction is required for proper folding in the endoplasmic reticulum. Interacts with MAP3K21; this interaction leads to negative regulation of TLR4 signaling. Interacts with CD36, following CD36 stimulation by oxLDL or amyloid-beta 42, and forms a heterodimer with TLR6. The trimeric complex is internalized and triggers inflammatory response. LYN kinase activity facilitates TLR4-TLR6 heterodimerization and signal initiation. Interacts with TICAM1 in response to LPS in a WDFY1-dependent manner. Interacts with WDFY1 in response to LPS. Interacts with SMPDL3B. Interacts with CEACAM1; upon lipopolysaccharide stimulation, forms a complex including TLR4 and the phosphorylated form of SYK and CEACAM1, which in turn, recruits PTPN6 that dephosphorylates SYK, reducing the production of reactive oxygen species (ROS) and lysosome disruption, which in turn, reduces the activity of the inflammasome. Interacts with RFTN1; the interaction occurs in response to lipopolysaccharide stimulation. Interacts with SCIMP; the interaction occurs in response to lipopolysaccharide stimulation and is enhanced by phosphorylation of SCIMP by LYN. This interaction facilitates the phosphorylation of TLR4 by LYN which elicits a selective cytokine response in macrophages. Interacts with TRAF3IP3. Interacts with TREM1; this interaction enhances TLR4-mediated inflammatory response. Interacts with ZG16B/PAUF. Interacts with CD82; this interaction inhibits TLR4-mediated signaling pathway. In terms of processing, phosphorylated on tyrosine residues by LYN after binding lipopolysaccharide. Ubiquitinated by RNF128 via 'Lys-28'-linked polyubiquitin chains, leading to proteasomal degradation.

The protein resides in the cell membrane. It is found in the early endosome. Its subcellular location is the cell projection. It localises to the ruffle. Functionally, transmembrane receptor that functions as a pattern recognition receptor recognizing pathogen- and damage-associated molecular patterns (PAMPs and DAMPs) to induce innate immune responses via downstream signaling pathways. At the plasma membrane, cooperates with LY96 to mediate the innate immune response to bacterial lipopolysaccharide (LPS). Also involved in LPS-independent inflammatory responses triggered by free fatty acids, such as palmitate, and Ni(2+). Mechanistically, acts via MYD88, TIRAP and TRAF6, leading to NF-kappa-B activation, cytokine secretion and the inflammatory response. Alternatively, CD14-mediated TLR4 internalization via endocytosis is associated with the initiation of a MYD88-independent signaling via the TICAM1-TBK1-IRF3 axis leading to type I interferon production. In addition to the secretion of proinflammatory cytokines, initiates the activation of NLRP3 inflammasome and formation of a positive feedback loop between autophagy and NF-kappa-B signaling cascade. In complex with TLR6, promotes inflammation in monocytes/macrophages by associating with TLR6 and the receptor CD86. Upon ligand binding, such as oxLDL or amyloid-beta 42, the TLR4:TLR6 complex is internalized and triggers inflammatory response, leading to NF-kappa-B-dependent production of CXCL1, CXCL2 and CCL9 cytokines, via MYD88 signaling pathway, and CCL5 cytokine, via TICAM1 signaling pathway. In myeloid dendritic cells, vesicular stomatitis virus glycoprotein G but not LPS promotes the activation of IRF7, leading to type I IFN production in a CD14-dependent manner. This Felis catus (Cat) protein is Toll-like receptor 4 (TLR4).